The following is a 315-amino-acid chain: Ribosomal RNA small subunit methyltransferase H (315 aa).

Residues 37–39 (GGH), Asp-57, Asp-105, and Gln-112 each bind S-adenosyl-L-methionine.

It belongs to the methyltransferase superfamily. RsmH family.

The protein resides in the cytoplasm. The catalysed reaction is cytidine(1402) in 16S rRNA + S-adenosyl-L-methionine = N(4)-methylcytidine(1402) in 16S rRNA + S-adenosyl-L-homocysteine + H(+). Its function is as follows. Specifically methylates the N4 position of cytidine in position 1402 (C1402) of 16S rRNA. In Nitrosococcus oceani (strain ATCC 19707 / BCRC 17464 / JCM 30415 / NCIMB 11848 / C-107), this protein is Ribosomal RNA small subunit methyltransferase H.